The sequence spans 473 residues: Vasculin (473 aa).

Disordered regions lie at residues 1–26, 44–163, 196–240, 258–286, and 305–342; these read MAQH…SLNF, RRRH…EYPP, SQPV…SFPH, NFSP…QQPR, and LKRD…QERD. Residue S49 is modified to Phosphoserine. R87 is modified (omega-N-methylarginine). Positions 93-107 are enriched in low complexity; the sequence is GSSRSRSSIFHSGKS. Residues 119–133 are compositionally biased toward basic and acidic residues; it reads ETGRKDDKRERKQFE. A phosphoserine mark is found at S274, S276, S322, and S381. Positions 305 to 329 are enriched in basic and acidic residues; it reads LKRDRVEEEHEDESHVGSEKDDDSF. The segment at 444 to 473 is disordered; that stretch reads GPWKNSTFKPTIENDDTETSSSDTSDDDDV. Residues 456–473 show a composition bias toward acidic residues; sequence ENDDTETSSSDTSDDDDV.

It belongs to the vasculin family. Interacts with GTF2B, GTF2F2, RNA polymerase II and TBP.

It localises to the nucleus. Its function is as follows. Functions as a GC-rich promoter-specific transactivating transcription factor. In Bos taurus (Bovine), this protein is Vasculin (GPBP1).